The following is a 79-amino-acid chain: RNA-binding protein Hfq (79 aa).

In terms of domain architecture, Sm spans 10-70; the sequence is DVFLNTVRKQ…ISTIMPGQPV (61 aa).

The protein belongs to the Hfq family. In terms of assembly, homohexamer.

Functionally, RNA chaperone that binds small regulatory RNA (sRNAs) and mRNAs to facilitate mRNA translational regulation in response to envelope stress, environmental stress and changes in metabolite concentrations. Also binds with high specificity to tRNAs. This Bartonella tribocorum (strain CIP 105476 / IBS 506) protein is RNA-binding protein Hfq.